A 589-amino-acid chain; its full sequence is Bifunctional protein TrpGD (589 aa).

In terms of domain architecture, Glutamine amidotransferase type-1 spans 46–241 (RVIVIDNYDS…LNIQDIQVKK (196 aa)). L-glutamine is bound at residue 99 to 101 (GPG). The Nucleophile; for GATase activity role is filled by cysteine 126. L-glutamine contacts are provided by residues glutamine 130 and 176–177 (SL). Residues histidine 215 and glutamate 217 each act as for GATase activity in the active site. An anthranilate phosphoribosyltransferase region spans residues 253–589 (ALKKLVEFED…MDYQKTLGNS (337 aa)).

It in the C-terminal section; belongs to the anthranilate phosphoribosyltransferase family. In terms of assembly, heterotetramer consisting of two non-identical subunits: a beta subunit (TrpG) and a large alpha subunit (TrpE).

It catalyses the reaction chorismate + L-glutamine = anthranilate + pyruvate + L-glutamate + H(+). The catalysed reaction is N-(5-phospho-beta-D-ribosyl)anthranilate + diphosphate = 5-phospho-alpha-D-ribose 1-diphosphate + anthranilate. It functions in the pathway amino-acid biosynthesis; L-tryptophan biosynthesis; L-tryptophan from chorismate: step 1/5. Its pathway is amino-acid biosynthesis; L-tryptophan biosynthesis; L-tryptophan from chorismate: step 2/5. In terms of biological role, part of a heterotetrameric complex that catalyzes the two-step biosynthesis of anthranilate, an intermediate in the biosynthesis of L-tryptophan. In the first step, the glutamine-binding beta subunit (TrpG) of anthranilate synthase (AS) provides the glutamine amidotransferase activity which generates ammonia as a substrate that, along with chorismate, is used in the second step, catalyzed by the large alpha subunit of AS (TrpE) to produce anthranilate. In the absence of TrpG, TrpE can synthesize anthranilate directly from chorismate and high concentrations of ammonia. In addition to synthesizing anthranilate, it also catalyzes the second step of the pathway, the transfer of the phosphoribosyl group of 5-phosphorylribose-1-pyrophosphate (PRPP) to anthranilate. The polypeptide is Bifunctional protein TrpGD (trpGD) (Thermotoga maritima (strain ATCC 43589 / DSM 3109 / JCM 10099 / NBRC 100826 / MSB8)).